The primary structure comprises 204 residues: Large ribosomal subunit protein bL25 (204 aa).

It belongs to the bacterial ribosomal protein bL25 family. CTC subfamily. As to quaternary structure, part of the 50S ribosomal subunit; part of the 5S rRNA/L5/L18/L25 subcomplex. Contacts the 5S rRNA. Binds to the 5S rRNA independently of L5 and L18.

This is one of the proteins that binds to the 5S RNA in the ribosome where it forms part of the central protuberance. The chain is Large ribosomal subunit protein bL25 from Burkholderia mallei (strain NCTC 10247).